The following is an 88-amino-acid chain: LYR motif-containing protein 2 (88 aa).

The N-terminal 19 residues, 1–19 (MATSRLPPATLTLKQFMRR), are a transit peptide targeting the mitochondrion.

Belongs to the complex I LYR family.

It localises to the mitochondrion. Its function is as follows. Involved in efficient integration of the N-module into mitochondrial respiratory chain complex I. In Bos taurus (Bovine), this protein is LYR motif-containing protein 2 (LYRM2).